A 497-amino-acid chain; its full sequence is G protein-coupled receptor gprM (497 aa).

Asn-3 carries an N-linked (GlcNAc...) asparagine glycan. 5 consecutive transmembrane segments (helical) span residues 66–86 (ISVA…VLPV), 98–118 (FTLG…PLGV), 138–158 (CAFT…WSFL), 179–199 (WGAL…MLIL), and 221–241 (YWIP…ATMA). A glycan (N-linked (GlcNAc...) asparagine) is linked at Asn-259. The next 2 helical transmembrane spans lie at 293-313 (VTLV…FIEL) and 357-377 (LLLA…ILFA). A glycan (N-linked (GlcNAc...) asparagine) is linked at Asn-421. A disordered region spans residues 428–497 (YKSPSPMVRS…APAVYREYDD (70 aa)).

Belongs to the G-protein coupled receptor GPR1/git3 family. In terms of assembly, interacts with gpaA.

It localises to the cell membrane. Its function is as follows. G protein-coupled receptor that plays a role in conidiation and regulation of the biosynthesis of secondary metabolites such as dihydroxynaphthalene (DHN)-melanin, via interaction with the G-protein complex alpha subunit gpaA. The sequence is that of G protein-coupled receptor gprM from Aspergillus fumigatus (strain CBS 144.89 / FGSC A1163 / CEA10) (Neosartorya fumigata).